The primary structure comprises 269 residues: Cell cycle regulator CcrZ (269 aa).

Phe-39, His-76, Trp-77, Met-78, and Gly-80 together coordinate ATP. The short motif at 164–171 (HCDVNHNN) is the Brenner's motif [HXDhX3N] element. The active-site Proton acceptor is Asp-166. Residues 180 to 203 (LYLIDWDGAMIADPAMDLGPLLYH) carry the APH motif.

The protein belongs to the aminoglycoside phosphotransferase family. As to quaternary structure, monomer in solution. Interacts with DnaA (via domains I (1-82) and III (111-326)). Interacts with DnaB. Interacts with FtsZ.

The protein localises to the cytoplasm. It carries out the reaction D-ribose + ATP = D-ribose 5-phosphate + ADP + H(+). It catalyses the reaction 2-deoxy-D-ribose + ATP = 2-deoxy-D-ribose 5-phosphate + ADP + H(+). Its activity is regulated as follows. Activated by D-ribose and 2-deoxy-D-ribose. Slightly activated by kanamycin and gentamicin. Its function is as follows. Plays a role in cell cycle regulation and chromosome integrity. Activates DnaA-dependent chromosomal DNA replication initiation ensuring that the chromosome is replicated at the right time during the cell cycle. May regulate replication initiation through phosphorylation of a possible second messenger or metabolite, and by interacting with replication initiation proteins. Has ATPase activity with D-ribose and 2-deoxy-D-ribose in vitro, but not with choline. Involved in DNA damage response. This Bacillus subtilis (strain 168) protein is Cell cycle regulator CcrZ.